An 89-amino-acid polypeptide reads, in one-letter code: Barrier-to-autointegration factor (89 aa).

Met1 carries the N-acetylmethionine modification. Thr2 carries the N-acetylthreonine; in Barrier-to-autointegration factor, N-terminally processed modification. Phosphothreonine; by VRK1 and VRK2 occurs at positions 2 and 3. Phosphoserine; by VRK1 and VRK2 is present on Ser4. The HhH domain maps to 20–35; it reads VGSLAGIGEVLGKKLE.

The protein belongs to the BAF family. Homodimer. Heterodimerizes with BANF2. Interacts with ANKLE2/LEM4, leading to decreased phosphorylation by VRK1 and promoting dephosphorylation by protein phosphatase 2A (PP2A). Binds non-specifically to double-stranded DNA, and is found as a hexamer or dodecamer upon DNA binding. Binds to LEM domain-containing nuclear proteins such as LEMD3/MAN1, TMPO/LAP2 and EMD (emerin). Interacts with ANKLE1 (via LEM domain); the interaction may favor BANF1 dimerization. Interacts with CRX and LMNA (lamin-A). Binds linker histone H1.1 and core histones H3. Interacts with LEMD2 (via LEM domain). Interacts with PARP1; interaction takes place in response to oxidative DNA damage. Ser-4 is the major site of phosphorylation as compared to Thr-2 and Thr-3. Phosphorylation on Thr-2; Thr-3 and Ser-4 disrupts its ability to bind DNA and reduces its ability to bind LEM domain-containing proteins. Non phosphorylated BAF seems to enhance binding between EMD and LMNA. Dephosphorylated by protein phosphatase 2A (PP2A) following interaction with ANKLE2/LEM4 during mitotic exit, leading to mitotic nuclear envelope reassembly.

It is found in the nucleus. Its subcellular location is the chromosome. The protein localises to the nucleus envelope. The protein resides in the cytoplasm. Its function is as follows. Non-specific DNA-binding protein that plays key roles in mitotic nuclear reassembly, chromatin organization, DNA damage response, gene expression and intrinsic immunity against foreign DNA. Contains two non-specific double-stranded DNA (dsDNA)-binding sites which promote DNA cross-bridging. Plays a key role in nuclear membrane reformation at the end of mitosis by driving formation of a single nucleus in a spindle-independent manner. Transiently cross-bridges anaphase chromosomes via its ability to bridge distant DNA sites, leading to the formation of a dense chromatin network at the chromosome ensemble surface that limits membranes to the surface. Also acts as a negative regulator of innate immune activation by restricting CGAS activity toward self-DNA upon acute loss of nuclear membrane integrity. Outcompetes CGAS for DNA-binding, thereby preventing CGAS activation and subsequent damaging autoinflammatory responses. Also involved in DNA damage response: interacts with PARP1 in response to oxidative stress, thereby inhibiting the ADP-ribosyltransferase activity of PARP1. Involved in the recognition of exogenous dsDNA in the cytosol: associates with exogenous dsDNA immediately after its appearance in the cytosol at endosome breakdown and is required to avoid autophagy. In case of poxvirus infection, has an antiviral activity by blocking viral DNA replication. This is Barrier-to-autointegration factor (BANF1) from Bos taurus (Bovine).